The chain runs to 353 residues: Feruloyl esterase B (353 aa).

The first 18 residues, 1 to 18 (MAIPLVLVLAWLLPVVLA), serve as a signal peptide directing secretion. Residues 19-291 (ASLTQVNNFG…VSVVLDWFGI (273 aa)) are catalytic. Ser-136 acts as the Charge relay system in catalysis. N-linked (GlcNAc...) asparagine glycans are attached at residues Asn-179 and Asn-246. The region spanning 317 to 353 (CTAAHWAQCGGIGYSGCTACASPYTCQKANDYYSQCL) is the CBM1 domain.

The protein belongs to the carbohydrate esterase 1 (CE1) family. Feruloyl esterase type B subfamily. Glycosylated.

Its subcellular location is the secreted. It catalyses the reaction feruloyl-polysaccharide + H2O = ferulate + polysaccharide.. Its activity is regulated as follows. Inhibited by the specific serine esterase inhibitor AEBSF. Functionally, involved in degradation of plant cell walls. Hydrolyzes the feruloyl-arabinose ester bond in arabinoxylans, and the feruloyl-galactose and feruloyl-arabinose ester bonds in pectin. Binds strongly to cellulose. The chain is Feruloyl esterase B (FAEB) from Talaromyces funiculosus (Fruitlet core rot fungus).